Here is a 418-residue protein sequence, read N- to C-terminus: Serine protease inhibitor A3M (418 aa).

Residues 1–20 (MAFIAALGILMAGICPTVLC) form the signal peptide. Residues Asn-104, Asn-184, and Asn-269 are each glycosylated (N-linked (GlcNAc...) asparagine). An RCL region spans residues 367–392 (GTEAAAATGFIFGFRSRRLQTMTVQF).

This sequence belongs to the serpin family. Expressed in liver and testis.

The protein localises to the secreted. The chain is Serine protease inhibitor A3M (Serpina3m) from Mus musculus (Mouse).